The sequence spans 139 residues: Membrane protein YqfB (139 aa).

The helical transmembrane segment at 3 to 23 (DLLTNPLIIAAIIGIISAIFG) threads the bilayer. The disordered stretch occupies residues 25–87 (KSKEEKQNSQ…TARNLKGLER (63 aa)). A coiled-coil region spans residues 62–97 (NRMEQARREAEERRRETARNLKGLERDLAAAKQKTV). Residues 65–87 (EQARREAEERRRETARNLKGLER) are compositionally biased toward basic and acidic residues.

The protein localises to the cell membrane. This is Membrane protein YqfB (yqfB) from Bacillus subtilis (strain 168).